The chain runs to 248 residues: DNA repair protein RecO (248 aa).

This sequence belongs to the RecO family.

Involved in DNA repair and RecF pathway recombination. This chain is DNA repair protein RecO, found in Streptomyces griseus subsp. griseus (strain JCM 4626 / CBS 651.72 / NBRC 13350 / KCC S-0626 / ISP 5235).